A 508-amino-acid polypeptide reads, in one-letter code: Inosine-5'-monophosphate dehydrogenase (508 aa).

CBS domains lie at 111 to 170 (FITD…EITL) and 174 to 230 (MTTN…PDAS). NAD(+) contacts are provided by residues Asp267 and 317–319 (GMG). K(+) is bound by residues Gly319 and Gly321. Ser322 serves as a coordination point for IMP. Cys324 contributes to the K(+) binding site. Cys324 functions as the Thioimidate intermediate in the catalytic mechanism. Residues 357–359 (DGG), 380–381 (GF), and 404–408 (YRGMA) each bind IMP. Arg420 serves as the catalytic Proton acceptor. Gln432 contacts IMP. Gly492 serves as a coordination point for K(+).

It belongs to the IMPDH/GMPR family. In terms of assembly, homotetramer. Requires K(+) as cofactor.

The catalysed reaction is IMP + NAD(+) + H2O = XMP + NADH + H(+). The protein operates within purine metabolism; XMP biosynthesis via de novo pathway; XMP from IMP: step 1/1. Mycophenolic acid (MPA) is a non-competitive inhibitor that prevents formation of the closed enzyme conformation by binding to the same site as the amobile flap. In contrast, mizoribine monophosphate (MZP) is a competitive inhibitor that induces the closed conformation. MPA is a potent inhibitor of mammalian IMPDHs but a poor inhibitor of the bacterial enzymes. MZP is a more potent inhibitor of bacterial IMPDH. Its function is as follows. Catalyzes the conversion of inosine 5'-phosphate (IMP) to xanthosine 5'-phosphate (XMP), the first committed and rate-limiting step in the de novo synthesis of guanine nucleotides, and therefore plays an important role in the regulation of cell growth. In Leptospira interrogans serogroup Icterohaemorrhagiae serovar Lai (strain 56601), this protein is Inosine-5'-monophosphate dehydrogenase.